The following is a 136-amino-acid chain: Small ribosomal subunit protein uS8c (136 aa).

This sequence belongs to the universal ribosomal protein uS8 family. In terms of assembly, part of the 30S ribosomal subunit.

Its subcellular location is the plastid. It is found in the chloroplast. In terms of biological role, one of the primary rRNA binding proteins, it binds directly to 16S rRNA central domain where it helps coordinate assembly of the platform of the 30S subunit. This is Small ribosomal subunit protein uS8c (rps8) from Citrus sinensis (Sweet orange).